Here is a 155-residue protein sequence, read N- to C-terminus: Ribosome maturation factor RimP (155 aa).

The protein belongs to the RimP family.

It is found in the cytoplasm. In terms of biological role, required for maturation of 30S ribosomal subunits. This Exiguobacterium sibiricum (strain DSM 17290 / CCUG 55495 / CIP 109462 / JCM 13490 / 255-15) protein is Ribosome maturation factor RimP.